Reading from the N-terminus, the 364-residue chain is Lysophosphatidic acid receptor 1 (364 aa).

The Extracellular portion of the chain corresponds to M1–K50. Disulfide bonds link C24/C190 and C188/C195. 2 N-linked (GlcNAc...) asparagine glycosylation sites follow: N27 and N35. K39 contacts a 1-acyl-sn-glycero-3-phosphate. Residues L51–Y75 traverse the membrane as a helical segment. Residues V76–P83 are Cytoplasmic-facing. A helical membrane pass occupies residues I84–F107. Topologically, residues N108–W121 are extracellular. A helical transmembrane segment spans residues L122 to I144. R124 to D129 contacts a 1-acyl-sn-glycero-3-phosphate. Over E145–R163 the chain is Cytoplasmic. A helical membrane pass occupies residues V164–V184. Residues G185–D204 lie on the Extracellular side of the membrane. Residues S205–Y225 traverse the membrane as a helical segment. W210 contacts a 1-acyl-sn-glycero-3-phosphate. Residues A226–S255 lie on the Cytoplasmic side of the membrane. Residues L256–L280 traverse the membrane as a helical segment. At D281–K294 the chain is on the extracellular side. Cysteines 284 and 287 form a disulfide. The helical transmembrane segment at F295 to D315 threads the bilayer. Residues K316–V364 lie on the Cytoplasmic side of the membrane. S341 carries the post-translational modification Phosphoserine. T351 carries the phosphothreonine modification.

It belongs to the G-protein coupled receptor 1 family. As to quaternary structure, interacts with RALA and GRK2. Interacts with GNAQ and GNA13. Interacts with CD14; the interaction is enhanced by exposure to bacterial lipopolysaccharide (LPS). N-glycosylated. Detected in lung. Detected in oligodendrocytes in corpus callosum in brain cortex (at protein level). Expressed within the embryonic cerebral cortex, where it is enriched in the ventricular zone. In the adult brain, also expressed in oligodendrocytes, as well as Schwann cells of the peripheral nervous system. Expressed in many other tissues, including lung, heart, intestine, spleen, thymus, and stomach. No expression in liver. Detected in kidney and testis. Detected in embryonic fibroblasts. Detected in adult lung fibroblasts and lung endothelial cells. Detected in dorsal root ganglion and dorsal root. Detected in astrocytes. Detected in bone.

The protein resides in the cell surface. The protein localises to the cell membrane. It is found in the endosome. Its function is as follows. Receptor for lysophosphatidic acid (LPA). Plays a role in the reorganization of the actin cytoskeleton, cell migration, differentiation and proliferation, and thereby contributes to the responses to tissue damage and infectious agents. Activates downstream signaling cascades via the G(i)/G(o), G(12)/G(13), and G(q) families of heteromeric G proteins. Signaling inhibits adenylyl cyclase activity and decreases cellular cAMP levels. Signaling triggers an increase of cytoplasmic Ca(2+) levels. Activates RALA; this leads to the activation of phospholipase C (PLC) and the formation of inositol 1,4,5-trisphosphate. Signaling mediates activation of down-stream MAP kinases. Contributes to the regulation of cell shape. Promotes Rho-dependent reorganization of the actin cytoskeleton in neuronal cells and neurite retraction. Promotes the activation of Rho and the formation of actin stress fibers. Promotes formation of lamellipodia at the leading edge of migrating cells via activation of RAC1. Through its function as LPA receptor, plays a role in chemotaxis and cell migration, including responses to injury and wounding. Plays a role in triggering inflammation in response to bacterial lipopolysaccharide (LPS) via its interaction with CD14. Promotes cell proliferation in response to LPA. Inhibits the intracellular ciliogenesis pathway in response to LPA and through AKT1 activation. Required for normal skeleton development. May play a role in osteoblast differentiation. Required for normal brain development. Required for normal proliferation, survival and maturation of newly formed neurons in the adult dentate gyrus. Plays a role in pain perception and in the initiation of neuropathic pain. The sequence is that of Lysophosphatidic acid receptor 1 (Lpar1) from Mus musculus (Mouse).